A 376-amino-acid polypeptide reads, in one-letter code: Flap endonuclease 1 (376 aa).

The interval Met-1–Ala-105 is N-domain. Residue Asp-34 coordinates Mg(2+). DNA-binding residues include Arg-47 and Arg-71. Residues Asp-87, Glu-159, Glu-161, Asp-180, and Asp-182 each contribute to the Mg(2+) site. Residues Gln-123 to Tyr-254 form an I-domain region. A DNA-binding site is contributed by Glu-159. DNA contacts are provided by Gly-232 and Asp-234. Position 234 (Asp-234) interacts with Mg(2+). The segment at Ala-336–Phe-344 is interaction with PCNA. The disordered stretch occupies residues Ser-352–Lys-376. Residues Val-360–Lys-376 show a composition bias toward basic residues.

Belongs to the XPG/RAD2 endonuclease family. FEN1 subfamily. Interacts with PCNA. Three molecules of FEN1 bind to one PCNA trimer with each molecule binding to one PCNA monomer. PCNA stimulates the nuclease activity without altering cleavage specificity. Mg(2+) is required as a cofactor. Phosphorylated. Phosphorylation upon DNA damage induces relocalization to the nuclear plasma.

It is found in the nucleus. It localises to the nucleolus. Its subcellular location is the nucleoplasm. The protein localises to the mitochondrion. Functionally, structure-specific nuclease with 5'-flap endonuclease and 5'-3' exonuclease activities involved in DNA replication and repair. During DNA replication, cleaves the 5'-overhanging flap structure that is generated by displacement synthesis when DNA polymerase encounters the 5'-end of a downstream Okazaki fragment. It enters the flap from the 5'-end and then tracks to cleave the flap base, leaving a nick for ligation. Also involved in the long patch base excision repair (LP-BER) pathway, by cleaving within the apurinic/apyrimidinic (AP) site-terminated flap. Acts as a genome stabilization factor that prevents flaps from equilibrating into structures that lead to duplications and deletions. Also possesses 5'-3' exonuclease activity on nicked or gapped double-stranded DNA, and exhibits RNase H activity. Also involved in replication and repair of rDNA and in repairing mitochondrial DNA. The protein is Flap endonuclease 1 of Entamoeba dispar (strain ATCC PRA-260 / SAW760).